Reading from the N-terminus, the 352-residue chain is Small ribosomal subunit biogenesis GTPase RsgA (352 aa).

The 169-residue stretch at 109 to 277 folds into the CP-type G domain; it reads DTVLKRPDMY…LIDSPGIREF (169 aa). GTP contacts are provided by residues 165–168 and 219–227; these read NKAD and GQSGVGKSS. 4 residues coordinate Zn(2+): Cys301, Cys306, His308, and Cys314.

Belongs to the TRAFAC class YlqF/YawG GTPase family. RsgA subfamily. In terms of assembly, monomer. Associates with 30S ribosomal subunit, binds 16S rRNA. It depends on Zn(2+) as a cofactor.

It is found in the cytoplasm. One of several proteins that assist in the late maturation steps of the functional core of the 30S ribosomal subunit. Helps release RbfA from mature subunits. May play a role in the assembly of ribosomal proteins into the subunit. Circularly permuted GTPase that catalyzes slow GTP hydrolysis, GTPase activity is stimulated by the 30S ribosomal subunit. This is Small ribosomal subunit biogenesis GTPase RsgA from Alcanivorax borkumensis (strain ATCC 700651 / DSM 11573 / NCIMB 13689 / SK2).